Here is a 130-residue protein sequence, read N- to C-terminus: kinetoplast-associated protein 2-2 (130 aa).

Positions 1-10 are excised as a propeptide; it reads MLRRTVSNFA. A disordered region spans residues 95-130; sequence ETKQAQRAKAQKAQKKPKSAKSKVKKAAKKAKKSKK. The segment covering 103–130 has biased composition (basic residues); it reads KAQKAQKKPKSAKSKVKKAAKKAKKSKK.

The protein belongs to the KAP family. In terms of assembly, associates with the kinetoplast DNA network.

The protein localises to the mitochondrion matrix. It localises to the kinetoplast. In terms of biological role, histone H1-like DNA-binding protein involved in the organization and segregation of kinetoplast DNA (kDNA). The mitochondrial DNA of kinetoplastid protozoa consists of about 5,000 minicircles and 20 to 30 maxicircles. These circular DNAs are held together by catenation into a highly organized compact disk structure referred to as a kinetoplast DNA (kDNA) network. Binds preferentially to a specific fragment of minicircle DNA and is able to compact kDNA networks through DNA charge neutralization and condensation. In Crithidia fasciculata, this protein is kinetoplast-associated protein 2-2 (KAP2-2).